Here is a 448-residue protein sequence, read N- to C-terminus: Bifunctional F420 biosynthesis protein FbiB (448 aa).

Residues 1–244 form a coenzyme F420:L-glutamate ligase region; sequence MTGPEHGSAS…PGANDLFWLG (244 aa). GTP contacts are provided by residues 20-23, S50, and K55; that span reads LPEF. A divalent metal cation is bound at residue D109. Position 112 (N112) interacts with GTP. Residues D150 and T151 each contribute to the a divalent metal cation site. The interval 245–448 is dehydro-coenzyme F420-0 reductase; sequence TAEALELGRQ…VPAADLLILK (204 aa). FMN contacts are provided by residues 260-264 and A288; that span reads RRSVR. D320 contributes to the coenzyme F420-(gamma-Glu)n binding site. FMN is bound by residues G399 and R436.

In the N-terminal section; belongs to the CofE family. Mg(2+) serves as cofactor. Mn(2+) is required as a cofactor. It depends on K(+) as a cofactor.

The catalysed reaction is oxidized coenzyme F420-0 + GTP + L-glutamate = oxidized coenzyme F420-1 + GDP + phosphate + H(+). It catalyses the reaction oxidized coenzyme F420-1 + GTP + L-glutamate = oxidized coenzyme F420-2 + GDP + phosphate + H(+). It carries out the reaction oxidized coenzyme F420-(gamma-L-Glu)(n) + GTP + L-glutamate = oxidized coenzyme F420-(gamma-L-Glu)(n+1) + GDP + phosphate + H(+). The enzyme catalyses oxidized coenzyme F420-0 + FMN + H(+) = dehydro coenzyme F420-0 + FMNH2. The protein operates within cofactor biosynthesis; coenzyme F420 biosynthesis. Bifunctional enzyme that catalyzes the GTP-dependent successive addition of multiple gamma-linked L-glutamates to the L-lactyl phosphodiester of 7,8-didemethyl-8-hydroxy-5-deazariboflavin (F420-0) to form polyglutamated F420 derivatives, and the FMNH2-dependent reduction of dehydro-F420-0 to form F420-0. In Mycobacterium tuberculosis (strain ATCC 25177 / H37Ra), this protein is Bifunctional F420 biosynthesis protein FbiB.